The following is an 801-amino-acid chain: Squamosa promoter-binding-like protein 7 (801 aa).

2 disordered regions span residues 1–23 and 59–91; these read MSSL…LVND and SPPL…DRVR. The segment at 135–212 adopts an SBP-type; atypical zinc-finger fold; sequence VARCQVPDCE…ERHNNRRKRK (78 aa). Zn(2+) is bound by residues cysteine 138, cysteine 143, cysteine 160, cysteine 163, cysteine 179, cysteine 182, histidine 186, and cysteine 198. Positions 195-211 match the Bipartite nuclear localization signal motif; that stretch reads KRSCRRKLERHNNRRKR. A compositionally biased stretch (basic residues) spans 203–213; the sequence is ERHNNRRKRKP. Disordered regions lie at residues 203-258 and 286-313; these read ERHN…PSLI and GSGE…NKSA. A compositionally biased stretch (polar residues) spans 222–233; that stretch reads EQQQVLSQNDNS. Residues 249–258 are compositionally biased toward basic and acidic residues; sequence QRAEEEPSLI. Polar residues predominate over residues 304–313; it reads SPSNGDNKSA.

Homodimer. Interacts with KIN17. Interacts with HY5. The cofactor is Zn(2+). In terms of tissue distribution, expressed in roots rosette leaves, cauline leaves, stems, flowers and siliques.

The protein localises to the nucleus speckle. In terms of biological role, transcription factor that participates in reprogramming global gene expression during copper deficiency in order to improve the metal uptake and prioritize its distribution to copper proteins of major importance. Binds directly to 5'-GTAC-3' motifs in the microRNA (miRNA) promoter of the stress-responsive miRNAs miR398b and miR398c to activate their transcription. During copper deficiency, activates the copper transporters COPT1 and COPT2, and the copper chaperone CCH, directly or indirectly via miRNAs. Required for the expression of the miRNAs miR397, miR408 and miR857. Acts coordinately with HY5 to regulate miR408 and its target genes in response to changes in light and copper conditions. Activates miR857 and its target genes in response to low copper conditions. Involved in cadmium stress response by regulating miR397a, miR398b, miR398c and miR857. Required for iron homeostasis during copper deficiency. In Arabidopsis thaliana (Mouse-ear cress), this protein is Squamosa promoter-binding-like protein 7 (SPL7).